Reading from the N-terminus, the 218-residue chain is Redox-sensing transcriptional repressor Rex (218 aa).

Positions 25–64 form a DNA-binding region, H-T-H motif; it reads WYLSYVQLLHADGCESVSSTRIARAVGVDASLVAKDLSYV. Position 99 to 104 (99 to 104) interacts with NAD(+); the sequence is GVGSLG.

Belongs to the transcriptional regulatory Rex family. Homodimer.

Its subcellular location is the cytoplasm. Its function is as follows. Modulates transcription in response to changes in cellular NADH/NAD(+) redox state. In Porphyromonas gingivalis (strain ATCC 33277 / DSM 20709 / CIP 103683 / JCM 12257 / NCTC 11834 / 2561), this protein is Redox-sensing transcriptional repressor Rex.